A 174-amino-acid chain; its full sequence is RNA pyrophosphohydrolase (174 aa).

Positions 6–149 constitute a Nudix hydrolase domain; that stretch reads GYRPNVGIIL…KRDVYLGALK (144 aa). The Nudix box motif lies at 38-59; the sequence is GGIKPGESPETAMYRELYEEVG.

The protein belongs to the Nudix hydrolase family. RppH subfamily. Requires a divalent metal cation as cofactor.

In terms of biological role, accelerates the degradation of transcripts by removing pyrophosphate from the 5'-end of triphosphorylated RNA, leading to a more labile monophosphorylated state that can stimulate subsequent ribonuclease cleavage. This chain is RNA pyrophosphohydrolase, found in Neisseria meningitidis serogroup B (strain ATCC BAA-335 / MC58).